Here is an 85-residue protein sequence, read N- to C-terminus: Probable Thioredoxin (85 aa).

A Glutaredoxin domain is found at 2–85 (VVKIEVFTSP…LFEAISDEIE (84 aa)). Cysteine 13 and cysteine 16 form a disulfide bridge.

It belongs to the glutaredoxin family.

The protein resides in the cytoplasm. Its function is as follows. Does not function as a glutathione-disulfide oxidoreductase in the presence of glutathione and glutathione reductase. May be a component of a ribonucleotide-reducing system distinct from the previously described systems utilizing thioredoxin or glutaredoxin. This Methanothermobacter marburgensis (strain ATCC BAA-927 / DSM 2133 / JCM 14651 / NBRC 100331 / OCM 82 / Marburg) (Methanobacterium thermoautotrophicum) protein is Probable Thioredoxin.